A 444-amino-acid polypeptide reads, in one-letter code: Glutamate-1-semialdehyde 2,1-aminomutase (444 aa).

At K267 the chain carries N6-(pyridoxal phosphate)lysine.

It belongs to the class-III pyridoxal-phosphate-dependent aminotransferase family. HemL subfamily. In terms of assembly, homodimer. It depends on pyridoxal 5'-phosphate as a cofactor.

The protein localises to the cytoplasm. The catalysed reaction is (S)-4-amino-5-oxopentanoate = 5-aminolevulinate. Its pathway is porphyrin-containing compound metabolism; protoporphyrin-IX biosynthesis; 5-aminolevulinate from L-glutamyl-tRNA(Glu): step 2/2. This Xylella fastidiosa (strain 9a5c) protein is Glutamate-1-semialdehyde 2,1-aminomutase.